The following is a 261-amino-acid chain: Cytochrome c oxidase subunit 3 (261 aa).

Residues 1 to 15 (MTHQTHAYHMVNPSP) are Mitochondrial matrix-facing. A helical transmembrane segment spans residues 16–34 (WPLTGALSALLMTSGLIMW). Topologically, residues 35–40 (FHYNSM) are mitochondrial intermembrane. A helical membrane pass occupies residues 41–66 (ALLTLGFTTNLLTMYQWWRDVIREGT). The Mitochondrial matrix segment spans residues 67–72 (FQGHHT). A helical transmembrane segment spans residues 73-105 (PIVQKGLRYGMVLFIVSEVFFFAGFFWAFYHSS). Over 106–128 (LAPTPELGGCWPPTGIIPLNPLE) the chain is Mitochondrial intermembrane. Residues 129–152 (VPLLNTSVLLASGVSITWAHHSLM) form a helical membrane-spanning segment. The Mitochondrial matrix portion of the chain corresponds to 153 to 155 (EGN). The chain crosses the membrane as a helical span at residues 156–183 (RKHMLQALFITISLGVYFTLLQASEYYE). At 184 to 190 (TSFTISD) the chain is on the mitochondrial intermembrane side. The helical transmembrane segment at 191-223 (GVYGSTFFMATGFHGLHVIIGSTFLIVCFLRQL) threads the bilayer. Over 224–232 (YYHFTSNHH) the chain is Mitochondrial matrix. The chain crosses the membrane as a helical span at residues 233–256 (FGFEAAAWYWHFVDVVWLFLYVSI). Residues 257-261 (YWWGS) are Mitochondrial intermembrane-facing.

Belongs to the cytochrome c oxidase subunit 3 family. Component of the cytochrome c oxidase (complex IV, CIV), a multisubunit enzyme composed of 14 subunits. The complex is composed of a catalytic core of 3 subunits MT-CO1, MT-CO2 and MT-CO3, encoded in the mitochondrial DNA, and 11 supernumerary subunits COX4I, COX5A, COX5B, COX6A, COX6B, COX6C, COX7A, COX7B, COX7C, COX8 and NDUFA4, which are encoded in the nuclear genome. The complex exists as a monomer or a dimer and forms supercomplexes (SCs) in the inner mitochondrial membrane with NADH-ubiquinone oxidoreductase (complex I, CI) and ubiquinol-cytochrome c oxidoreductase (cytochrome b-c1 complex, complex III, CIII), resulting in different assemblies (supercomplex SCI(1)III(2)IV(1) and megacomplex MCI(2)III(2)IV(2)).

Its subcellular location is the mitochondrion inner membrane. It carries out the reaction 4 Fe(II)-[cytochrome c] + O2 + 8 H(+)(in) = 4 Fe(III)-[cytochrome c] + 2 H2O + 4 H(+)(out). In terms of biological role, component of the cytochrome c oxidase, the last enzyme in the mitochondrial electron transport chain which drives oxidative phosphorylation. The respiratory chain contains 3 multisubunit complexes succinate dehydrogenase (complex II, CII), ubiquinol-cytochrome c oxidoreductase (cytochrome b-c1 complex, complex III, CIII) and cytochrome c oxidase (complex IV, CIV), that cooperate to transfer electrons derived from NADH and succinate to molecular oxygen, creating an electrochemical gradient over the inner membrane that drives transmembrane transport and the ATP synthase. Cytochrome c oxidase is the component of the respiratory chain that catalyzes the reduction of oxygen to water. Electrons originating from reduced cytochrome c in the intermembrane space (IMS) are transferred via the dinuclear copper A center (CU(A)) of subunit 2 and heme A of subunit 1 to the active site in subunit 1, a binuclear center (BNC) formed by heme A3 and copper B (CU(B)). The BNC reduces molecular oxygen to 2 water molecules using 4 electrons from cytochrome c in the IMS and 4 protons from the mitochondrial matrix. This Canis lupus familiaris (Dog) protein is Cytochrome c oxidase subunit 3 (MT-CO3).